The following is a 448-amino-acid chain: Probable D-serine dehydratase (448 aa).

Lys-119 is modified (N6-(pyridoxal phosphate)lysine).

It belongs to the serine/threonine dehydratase family. DsdA subfamily. Pyridoxal 5'-phosphate is required as a cofactor.

It catalyses the reaction D-serine = pyruvate + NH4(+). This is Probable D-serine dehydratase from Pseudomonas paraeruginosa (strain DSM 24068 / PA7) (Pseudomonas aeruginosa (strain PA7)).